The sequence spans 85 residues: Homeobox protein knotted-1-like 8 (85 aa).

Residues 1 to 21 (ELKHQLLRKYGGYLGGLRQEF) form the ELK domain. The segment at residues 22-85 (SKRKKKGKLP…NQRKRHWKPA (64 aa)) is a DNA-binding region (homeobox; TALE-type).

It belongs to the TALE/KNOX homeobox family. As to expression, strongly expressed in ear inflorescence primordia and shoot meristem. Weakly expressed in embryos. Absent from leaves.

It is found in the nucleus. Functionally, probably binds to the DNA sequence 5'-TGAC-3'. The polypeptide is Homeobox protein knotted-1-like 8 (KNOX8) (Zea mays (Maize)).